A 337-amino-acid polypeptide reads, in one-letter code: Ketol-acid reductoisomerase (NADP(+)) (337 aa).

Residues 3 to 183 (IDVFYDDDAD…GGGRAGVIPT (181 aa)) enclose the KARI N-terminal Rossmann domain. Residues 26-29 (YGSQ), R49, S52, S54, and 84-87 (DTSQ) each bind NADP(+). H109 is an active-site residue. G135 serves as a coordination point for NADP(+). The region spanning 184–329 (TFEAETVTDL…EKLRDLMSWV (146 aa)) is the KARI C-terminal knotted domain. Residues D192, E196, E228, and E232 each coordinate Mg(2+). Substrate is bound at residue S253.

It belongs to the ketol-acid reductoisomerase family. Requires Mg(2+) as cofactor.

It catalyses the reaction (2R)-2,3-dihydroxy-3-methylbutanoate + NADP(+) = (2S)-2-acetolactate + NADPH + H(+). The enzyme catalyses (2R,3R)-2,3-dihydroxy-3-methylpentanoate + NADP(+) = (S)-2-ethyl-2-hydroxy-3-oxobutanoate + NADPH + H(+). Its pathway is amino-acid biosynthesis; L-isoleucine biosynthesis; L-isoleucine from 2-oxobutanoate: step 2/4. It participates in amino-acid biosynthesis; L-valine biosynthesis; L-valine from pyruvate: step 2/4. Its function is as follows. Involved in the biosynthesis of branched-chain amino acids (BCAA). Catalyzes an alkyl-migration followed by a ketol-acid reduction of (S)-2-acetolactate (S2AL) to yield (R)-2,3-dihydroxy-isovalerate. In the isomerase reaction, S2AL is rearranged via a Mg-dependent methyl migration to produce 3-hydroxy-3-methyl-2-ketobutyrate (HMKB). In the reductase reaction, this 2-ketoacid undergoes a metal-dependent reduction by NADPH to yield (R)-2,3-dihydroxy-isovalerate. This is Ketol-acid reductoisomerase (NADP(+)) from Corynebacterium urealyticum (strain ATCC 43042 / DSM 7109).